The chain runs to 482 residues: Caspase-8 (482 aa).

Residues 1 to 218 (MDFHSCLYDI…DMWDSPGEQE (218 aa)) constitute a propeptide that is removed on maturation. DED domains are found at residues 2–80 (DFHS…RVLK) and 100–177 (AYRV…RIDD). Phosphoserine occurs at positions 188 and 213. Residue His-319 is part of the active site. Residue Tyr-336 is modified to Phosphotyrosine. Residue Cys-362 is part of the active site. The propeptide occupies 379 to 388 (LEQEHVLEED). Ser-390 is subject to Phosphoserine; by CDK1.

Belongs to the peptidase C14A family. Heterotetramer that consists of two anti-parallel arranged heterodimers, each one formed by a 18 kDa (p18) and a 10 kDa (p10) subunit. Component of the death-induced signaling complex (DISC) composed of cell surface receptor FAS/CD95 or TNFRSF1A, adapter protein FADD and the CASP8 protease; recruitment of CASP8 to the complex is required for processing of CASP8 into the p18 and p10 subunits. Component of the AIM2 PANoptosome complex, a multiprotein complex that drives inflammatory cell death (PANoptosis). Interacts with CFLAR and PEA15. Interacts with RFFL and RNF34; negatively regulate CASP8 through proteasomal degradation. Interacts with TNFAIP8L2. Interacts with CASP8AP2. Interacts with NOL3; decreases CASP8 activity in a mitochondria localization- and phosphorylation-dependent manner and this interaction is dissociated by calcium. Interacts with UBR2. Interacts with RIPK1. Interacts with stimulated TNFRSF10B; this interaction is followed by CASP8 proteolytic cleavage and activation. In terms of processing, generation of the subunits requires association with the death-inducing signaling complex (DISC), whereas additional processing is likely due to the autocatalytic activity of the activated protease. GZMB and CASP10 can be involved in these processing events. Phosphorylation on Ser-389 during mitosis by CDK1 inhibits activation by proteolysis and prevents apoptosis. This phosphorylation occurs in cancer cell lines, as well as in primary breast tissues and lymphocytes.

The protein localises to the cytoplasm. It is found in the nucleus. It catalyses the reaction Strict requirement for Asp at position P1 and has a preferred cleavage sequence of (Leu/Asp/Val)-Glu-Thr-Asp-|-(Gly/Ser/Ala).. CASP8 activity is restricted by RIPK1. Thiol protease that plays a key role in programmed cell death by acting as a molecular switch for apoptosis, necroptosis and pyroptosis, and is required to prevent tissue damage during embryonic development and adulthood. Initiator protease that induces extrinsic apoptosis by mediating cleavage and activation of effector caspases responsible for FAS/CD95-mediated and TNFRSF1A-induced cell death. Cleaves and activates effector caspases CASP3, CASP4, CASP6, CASP7, CASP9 and CASP10. Binding to the adapter molecule FADD recruits it to either receptor FAS/CD95 or TNFRSF1A. The resulting aggregate called the death-inducing signaling complex (DISC) performs CASP8 proteolytic activation. The active dimeric enzyme is then liberated from the DISC and free to activate downstream apoptotic proteases. Proteolytic fragments of the N-terminal propeptide (termed CAP3, CAP5 and CAP6) are likely retained in the DISC. In addition to extrinsic apoptosis, also acts as a negative regulator of necroptosis: acts by cleaving RIPK1 at 'Asp-325', which is crucial to inhibit RIPK1 kinase activity, limiting TNF-induced apoptosis, necroptosis and inflammatory response. Also able to initiate pyroptosis by mediating cleavage and activation of gasdermin-C and -D (GSDMC and GSDMD, respectively): gasdermin cleavage promotes release of the N-terminal moiety that binds to membranes and forms pores, triggering pyroptosis. Initiates pyroptosis following inactivation of MAP3K7/TAK1. Also acts as a regulator of innate immunity by mediating cleavage and inactivation of N4BP1 downstream of TLR3 or TLR4, thereby promoting cytokine production. May participate in the Granzyme B (GZMB) cell death pathways. Cleaves PARP1 and PARP2. The polypeptide is Caspase-8 (Rattus norvegicus (Rat)).